Reading from the N-terminus, the 109-residue chain is uncharacterized protein (109 aa).

The disordered stretch occupies residues 36 to 109; that stretch reads NSSNNLNNNN…KKKKKKRRVK (74 aa). Residues 39-88 are compositionally biased toward low complexity; the sequence is NNLNNNNFNENNLKNNNNRNGNNNNNNNNNNNNNNNNNNNNNNNNNNNNN. The span at 99-109 shows a compositional bias: basic residues; that stretch reads QKKKKKKRRVK.

This is an uncharacterized protein from Dictyostelium discoideum (Social amoeba).